The sequence spans 175 residues: Large ribosomal subunit protein mL67 (175 aa).

The protein belongs to the mitochondrion-specific ribosomal protein mL67 family. In terms of assembly, component of the mitochondrial large ribosomal subunit (mt-LSU). Mature yeast 74S mitochondrial ribosomes consist of a small (37S) and a large (54S) subunit. The 37S small subunit contains a 15S ribosomal RNA (15S mt-rRNA) and at least 32 different proteins. The 54S large subunit contains a 21S rRNA (21S mt-rRNA) and at least 45 different proteins.

The protein localises to the mitochondrion. Its function is as follows. Component of the mitochondrial ribosome (mitoribosome), a dedicated translation machinery responsible for the synthesis of mitochondrial genome-encoded proteins, including at least some of the essential transmembrane subunits of the mitochondrial respiratory chain. The mitoribosomes are attached to the mitochondrial inner membrane and translation products are cotranslationally integrated into the membrane. mL67/mhr1 also has extraribosomal functions, being involved in regulation of mitochondrial DNA recombination, maintenance and repair, and generation of homoplasmic cells. mL67/mhr1 also acts as transcription factor involved in regulation of RNA polymerase II-dependent transcription. In Schizosaccharomyces pombe (strain 972 / ATCC 24843) (Fission yeast), this protein is Large ribosomal subunit protein mL67 (mhr1).